We begin with the raw amino-acid sequence, 933 residues long: Clumping factor A (933 aa).

The N-terminal stretch at 1–39 (MNMKKKEKHAIRKKSIGVASVLVGTLIGFGLLSSKEADA) is a signal peptide. A YSIRK-G/S signaling motif motif is present at residues 9–20 (HAIRKKSIGVAS). 2 disordered regions span residues 34–200 (SKEA…SNKD) and 529–904 (FNNG…SEDE). The interval 40–542 (SENSVTQSDS…SGSGDGIDKP (503 aa)) is ligand binding A region. Residues 47–65 (SDSASNESKSNDSSSVSAA) are compositionally biased toward low complexity. Positions 71–105 (TNVSDTKTSSNTNNGETSVAQNPAQQETTQSSSTN) are enriched in polar residues. Composition is skewed to low complexity over residues 106–132 (ATTE…ATTQ) and 143–162 (NQTS…SVNS). A compositionally biased stretch (polar residues) spans 163–200 (PQNSTNAENVSTTQDTSTEATPSNNESAPQSTDASNKD). Acidic residues predominate over residues 547-565 (QPDEPGEIEPIPEDSDSDP). Positions 566–598 (GSDSGSDSNSDSGSDSGSDSTSDSGSDSASDSD) are enriched in low complexity. Positions 599–861 (SASDSDSASD…DSDSESDSNS (263 aa)) are enriched in acidic residues. The segment covering 862-880 (DSESGSNNNVVPPNSPKNG) has biased composition (low complexity). The span at 887 to 896 (NEAKDSKEPL) shows a compositional bias: basic and acidic residues. An LPXTG sorting signal motif is present at residues 896 to 900 (LPDTG). Thr-899 carries the pentaglycyl murein peptidoglycan amidated threonine modification. Positions 900-933 (GSEDEANTSLIWGLLASIGSLLLFRRKKENKDKK) are cleaved as a propeptide — removed by sortase.

This sequence belongs to the serine-aspartate repeat-containing protein (SDr) family.

The protein resides in the secreted. It localises to the cell wall. Cell surface-associated protein implicated in virulence. Promotes bacterial attachment exclusively to the gamma-chain of human fibrinogen. Induces formation of bacterial clumps. The sequence is that of Clumping factor A (clfA) from Staphylococcus aureus (strain COL).